Here is a 157-residue protein sequence, read N- to C-terminus: Protein E6 (157 aa).

2 zinc fingers span residues 39–75 (CNFCGKFLDFLEVCDFDKKQLTLIWKGHFVTACCRSC) and 112–148 (CQTCLSFLDTIEKLDSCGRGLPFHKVRDRWKGICRQC).

Belongs to the papillomaviridae E6 protein family. Forms homodimers. Interacts with ubiquitin-protein ligase UBE3A/E6-AP; this interaction stimulates UBE3A ubiquitin activity. Interacts with host BAK1.

The protein localises to the host cytoplasm. Its subcellular location is the host nucleus. In terms of biological role, plays a major role in the induction and maintenance of cellular transformation. E6 associates with host UBE3A/E6-AP ubiquitin-protein ligase and modulates its activity. Protects host keratinocytes from apoptosis by mediating the degradation of host BAK1. May also inhibit host immune response. This chain is Protein E6, found in Homo sapiens (Human).